The following is an 855-amino-acid chain: DNA mismatch repair protein MutS (855 aa).

613–620 is an ATP binding site; that stretch reads GPNMGGKS.

The protein belongs to the DNA mismatch repair MutS family.

Functionally, this protein is involved in the repair of mismatches in DNA. It is possible that it carries out the mismatch recognition step. This protein has a weak ATPase activity. The sequence is that of DNA mismatch repair protein MutS from Azotobacter vinelandii (strain DJ / ATCC BAA-1303).